A 233-amino-acid polypeptide reads, in one-letter code: Outer membrane protein MIP (233 aa).

The signal sequence occupies residues 1–20 (MKMKLVTAAVMGLAMSTAMA). One can recognise a PPIase FKBP-type domain in the interval 144–233 (SDTVTVEYTG…IHLISVKKSS (90 aa)).

The protein belongs to the FKBP-type PPIase family.

It localises to the cell outer membrane. The catalysed reaction is [protein]-peptidylproline (omega=180) = [protein]-peptidylproline (omega=0). In terms of biological role, essential virulence factor associated with macrophage infectivity. Exhibits PPIase activity. The polypeptide is Outer membrane protein MIP (mip) (Legionella pneumophila (strain Corby)).